Here is a 285-residue protein sequence, read N- to C-terminus: Probable glucose uptake protein GlcU (285 aa).

Helical transmembrane passes span 4-21 (FLAILPAIFWGSIVLFNV), 26-48 (GPYSQTLGTTFGALIFSIVVYIF), 52-71 (VLTPTVIGVGIVSGLFWALG), 84-106 (VSRTMPISTGLQLVSTTLFGVIV), 110-132 (WSTIISVVLGVLALVCIIIGVIL), 153-175 (IIILLISTVGYLVYVVVIRLFNV), 180-197 (ALLPQAVGMVLGGILLTF), 210-227 (IIPGLIWAAGNMFLFISQ), 232-254 (VATSFSLSQMGIIISTLGGILIL), and 266-283 (IVVGIVFIIAAGIMLGIA).

Belongs to the GRP transporter (TC 2.A.7.5) family.

The protein localises to the cell membrane. Functionally, involved in the uptake of glucose. In Bacillus anthracis, this protein is Probable glucose uptake protein GlcU (glcU).